We begin with the raw amino-acid sequence, 3961 residues long: Hybrid PKS-NRPS synthetase phm1 (3961 aa).

Residues 4-436 (SEPIAIIGSA…GTNAHAIVEA (433 aa)) form the Ketosynthase family 3 (KS3) domain. Active-site for beta-ketoacyl synthase activity residues include Cys178, His317, and His356. The segment at 541–867 (VFTGQGAQWP…RSKNDILELS (327 aa)) is malonyl-CoA:ACP transacylase (MAT) domain. An N-terminal hotdog fold region spans residues 933–1068 (HPILGKRCLE…GTVTVTLAEP (136 aa)). The interval 933-1234 (HPILGKRCLE…LELVPFTAAR (302 aa)) is dehydratase (DH) domain. A PKS/mFAS DH domain is found at 933-1236 (HPILGKRCLE…LVPFTAARPE (304 aa)). His966 functions as the Proton acceptor; for dehydratase activity in the catalytic mechanism. Residues 1083-1236 (MTEIEVDRFY…LVPFTAARPE (154 aa)) are C-terminal hotdog fold. Asp1143 (proton donor; for dehydratase activity) is an active-site residue. A methyltransferase (MT) domain region spans residues 1376-1569 (FDFYDQGLGL…GFGGIDTSTP (194 aa)). Positions 2106–2277 (TYLLIGMSGQ…GVPGSAISIS (172 aa)) are ketoreductase (KR) domain. Residues 2386–2464 (QAATIIKDGF…ELLQEAMDRT (79 aa)) form the Carrier 1 domain. Residue Ser2424 is modified to O-(pantetheine 4'-phosphoryl)serine. A disordered region spans residues 2482-2527 (PVTNTATPPPEVQVTGSASDSSRSLTPDGLSTSRPSTPVRTPMTEI). The span at 2495-2520 (VTGSASDSSRSLTPDGLSTSRPSTPV) shows a compositional bias: polar residues. The tract at residues 2553 to 2993 (PMSYGQARFW…DLPRWAGADV (441 aa)) is condensation (C) domain. Residues 3019 to 3424 (QMIGTYASKP…DGALFVHGRI (406 aa)) form an adenylation (A) (KR) domain region. In terms of domain architecture, Carrier 2 spans 3542-3616 (ANMEGRVAAL…GMARHVRAAF (75 aa)). O-(pantetheine 4'-phosphoryl)serine is present on Ser3576. Positions 3725–3871 (ITDIVFHCAA…VRPVSDVATT (147 aa)) are reductase (RED) domain.

The protein in the C-terminal section; belongs to the NRP synthetase family.

Its pathway is secondary metabolite biosynthesis. In terms of biological role, hybrid PKS-NRPS synthetase; part of the gene cluster that mediates the biosynthesis of the trans-fused decalin-containing tetramic acid phomasetin, the stereochemical opposite of the HIV-1 integrase inhibitor equisetin. The PKS module of phm1 together with the enoylreductase phm4 catalyze the formation of the polyketide unit which is then conjugated to L-serine by the condensation domain of the phm1 NRPS module. Activity of the Dieckmann cyclase domain (RED) of phm1 results in release of the Dieckmann product intermediate. The Diels-Alderase phm7 then uses the Dieckmann product of phm1 as substrate and catalyzes the Diels-Alder cycloaddition to form the decalin ring of N-desmethylphomasetin. N-desmethylphomasetin is further methylated to phomasetin by the methyltransferase phm5. The chain is Hybrid PKS-NRPS synthetase phm1 from Pyrenochaetopsis sp.